Here is a 2464-residue protein sequence, read N- to C-terminus: Highly reducing polyketide synthase xilA (2464 aa).

The Ketosynthase family 3 (KS3) domain maps to 9 to 437; the sequence is HDPIALVGIG…GTNGHCIIDH (429 aa). Active-site for beta-ketoacyl synthase activity residues include Cys182, His318, and His360. Residues 461–487 are compositionally biased toward low complexity; it reads QNGINGTNGTNGTNGTNGTNGTNGTNG. The interval 461-495 is disordered; that stretch reads QNGINGTNGTNGTNGTNGTNGTNGTNGHHNPKTEA. The Malonyl-CoA:ACP transacylase (MAT) domain maps to 589–911; it reads FIFTGQGAQW…LKRNEDAQRL (323 aa). The segment at 983 to 1121 is N-terminal hotdog fold; the sequence is HDLLGSKVPG…GQIKIEVSTF (139 aa). The PKS/mFAS DH domain maps to 983-1286; sequence HDLLGSKVPG…FTSLNNEQES (304 aa). His1015 acts as the Proton acceptor; for dehydratase activity in catalysis. The segment at 1133–1286 is C-terminal hotdog fold; that stretch reads GRLVDAQTWY…FTSLNNEQES (154 aa). The Proton donor; for dehydratase activity role is filled by Asp1199. The segment at 1282–1490 is methyltransferase (CMeT) domain; sequence NEQESTSTGD…TEPAHHSTIT (209 aa). One can recognise an Enoyl reductase (ER) domain in the interval 1716 to 2028; it reads GILTSLYFKP…KGTHIGKMVI (313 aa). In terms of domain architecture, Ketoreductase (KR) spans 2052-2231; sequence ANYILVGGMS…ATTVSLGFIN (180 aa). The 79-residue stretch at 2383-2461 folds into the Carrier domain; it reads ETVTFVTDAI…SIAQVIVEEA (79 aa). Ser2420 is modified (O-(pantetheine 4'-phosphoryl)serine).

The cofactor is pantetheine 4'-phosphate.

The protein operates within secondary metabolite biosynthesis. Highly reducing polyketide synthase; part of the gene cluster that mediates the biosynthesis of the 6-methyl-2-pyrone derivative xylariolide D. XilA produces the 5-alkyl-6-methyl-2-pyrone backbone called prexylariolide D via sequential condensations of 4 malonyl-CoA units with one acetyl-CoA starter unit. During the biosynthesis, the linear polyketide chain is branched by the addition of an acetyl unit as the origin of the methyl group at the 2-pyrone ring. Prexylariolide D is then hydroxylated at the side chain by xilC to form the final product, xylariolide D. The protein is Highly reducing polyketide synthase xilA of Penicillium rubens (strain ATCC 28089 / DSM 1075 / NRRL 1951 / Wisconsin 54-1255) (Penicillium chrysogenum).